Here is a 557-residue protein sequence, read N- to C-terminus: Leucine-rich glioma-inactivated protein 1 (557 aa).

A signal peptide spans 1-34; that stretch reads MESERSKRMGNACIPLKRIAYFLCLLSALLLTEG. Residues 35-72 form the LRRNT domain; that stretch reads KKPAKPKCPAVCTCTKDNALCENARSIPRTVPPDVISL. LRR repeat units lie at residues 92 to 113, 116 to 137, and 140 to 161; these read SLQL…AFIG, HLEY…TFRG, and SLIH…IFKG. Residues 173-223 form the LRRCT domain; it reads NSFNCDCKLKWLVEWLGHTNATVEDIYCEGPPEYKKRKINSLSSKDFDCII. N-linked (GlcNAc...) asparagine glycosylation occurs at Asn192. EAR repeat units follow at residues 225-267, 271-313, 317-364, 366-415, 419-462, 464-506, and 510-552; these read EFAK…EWDH, TFRN…KRDS, KFIK…KWNG, GFYS…QWNK, LFTN…KWGG, SFQD…NWDA, and KFVK…KHVI. A glycan (N-linked (GlcNAc...) asparagine) is linked at Asn277. Asn422 carries N-linked (GlcNAc...) asparagine glycosylation.

In terms of assembly, oligomer. Interacts with KCNA1 within a complex containing KCNA1, KCNA4 and KCNAB1. Part of a complex containing ADAM22, DLG4/PSD95 and CACNG2/Stargazin. Can bind to ADAM11 and ADAM23. Post-translationally, glycosylated. Predominantly expressed in neural tissues, especially in brain. Expression is reduced in low-grade brain tumors and significantly reduced or absent in malignant gliomas. As to expression, expressed in the occipital cortex and hippocampus; higher amounts are observed in the parietal and frontal cortices, putamen, and, particularly, in the temporal neocortex, where it is between 3 and 5 times more abundant than in the hippocampus (at protein level). Expression is absent in the cerebellum. In terms of tissue distribution, abundantly expressed in the occipital cortex and weakly expressed in the hippocampus (at protein level).

Its subcellular location is the secreted. It localises to the synapse. The protein resides in the cytoplasm. It is found in the golgi apparatus. The protein localises to the endoplasmic reticulum. In terms of biological role, regulates voltage-gated potassium channels assembled from KCNA1, KCNA4 and KCNAB1. It slows down channel inactivation by precluding channel closure mediated by the KCNAB1 subunit. Ligand for ADAM22 that positively regulates synaptic transmission mediated by AMPA-type glutamate receptors. Plays a role in suppressing the production of MMP1/3 through the phosphatidylinositol 3-kinase/ERK pathway. May play a role in the control of neuroblastoma cell survival. The chain is Leucine-rich glioma-inactivated protein 1 (LGI1) from Homo sapiens (Human).